We begin with the raw amino-acid sequence, 95 residues long: Large ribosomal subunit protein uL23 (95 aa).

The protein belongs to the universal ribosomal protein uL23 family. In terms of assembly, part of the 50S ribosomal subunit. Contacts protein L29, and trigger factor when it is bound to the ribosome.

In terms of biological role, one of the early assembly proteins it binds 23S rRNA. One of the proteins that surrounds the polypeptide exit tunnel on the outside of the ribosome. Forms the main docking site for trigger factor binding to the ribosome. The polypeptide is Large ribosomal subunit protein uL23 (Desulfotalea psychrophila (strain LSv54 / DSM 12343)).